The sequence spans 607 residues: ATP-dependent DNA helicase II subunit 1 (607 aa).

In terms of domain architecture, Ku spans 241 to 452 (MDLGNDVRIG…IETMQRILRG (212 aa)). One can recognise an SAP domain in the interval 570-604 (IKALKVSQLKDILRDRGLRVSGKKADLLDNLTNYV).

It belongs to the ku70 family. As to quaternary structure, heterodimer of pku70 and pku80.

It is found in the nucleus. The protein localises to the chromosome. The protein resides in the telomere. The enzyme catalyses ATP + H2O = ADP + phosphate + H(+). In terms of biological role, single-stranded DNA-dependent ATP-dependent helicase. Involved in non-homologous end joining (NHEJ) DNA double strand break repair. DNA-binding is sequence-independent but has a high affinity to nicks in double-stranded DNA and to the ends of duplex DNA. Binds to naturally occurring chromosomal ends, and therefore provides chromosomal end protection. Required also for telomere recombination to repair telomeric ends in the absence of telomerase. ku70, of the ku70/ku80 heterodimer, binds to the stem loop of tlc1, the RNA component of telomerase. Required for mating-type switching. Involved in telomere maintenance. Interacts with telomeric repeats and subtelomeric sequences thereby controlling telomere length and protecting against subtelomeric rearrangement. Maintains telomeric chromatin, which is involved in silencing the expression of genes located at the telomere. This chain is ATP-dependent DNA helicase II subunit 1 (pku70), found in Schizosaccharomyces pombe (strain 972 / ATCC 24843) (Fission yeast).